A 207-amino-acid chain; its full sequence is Small ribosomal subunit protein uS4A (207 aa).

The 61-residue stretch at 98 to 158 (TRLDNVAYRL…EKSKSSAKFK (61 aa)) folds into the S4 RNA-binding domain.

Belongs to the universal ribosomal protein uS4 family. Part of the 30S ribosomal subunit. Contacts protein S5. The interaction surface between S4 and S5 is involved in control of translational fidelity.

In terms of biological role, one of the primary rRNA binding proteins, it binds directly to 16S rRNA where it nucleates assembly of the body of the 30S subunit. Functionally, with S5 and S12 plays an important role in translational accuracy. The protein is Small ribosomal subunit protein uS4A of Alkaliphilus oremlandii (strain OhILAs) (Clostridium oremlandii (strain OhILAs)).